The primary structure comprises 425 residues: Serine--tRNA ligase (425 aa).

L-serine is bound at residue 230 to 232 (TAE). 261-263 (RSE) lines the ATP pocket. Residue Glu284 coordinates L-serine. 348–351 (EISS) contributes to the ATP binding site. Position 383 (Ser383) interacts with L-serine.

This sequence belongs to the class-II aminoacyl-tRNA synthetase family. Type-1 seryl-tRNA synthetase subfamily. In terms of assembly, homodimer. The tRNA molecule binds across the dimer.

The protein resides in the cytoplasm. It catalyses the reaction tRNA(Ser) + L-serine + ATP = L-seryl-tRNA(Ser) + AMP + diphosphate + H(+). It carries out the reaction tRNA(Sec) + L-serine + ATP = L-seryl-tRNA(Sec) + AMP + diphosphate + H(+). It functions in the pathway aminoacyl-tRNA biosynthesis; selenocysteinyl-tRNA(Sec) biosynthesis; L-seryl-tRNA(Sec) from L-serine and tRNA(Sec): step 1/1. Its function is as follows. Catalyzes the attachment of serine to tRNA(Ser). Is also able to aminoacylate tRNA(Sec) with serine, to form the misacylated tRNA L-seryl-tRNA(Sec), which will be further converted into selenocysteinyl-tRNA(Sec). The protein is Serine--tRNA ligase of Ligilactobacillus salivarius (strain UCC118) (Lactobacillus salivarius).